The primary structure comprises 470 residues: MLKVFNTMTRQKETFEPITPGVVNMYVCGPTVYNYIHIGNARSAIAFDTIRRYFEYRGYQVKYVSNFTDVDDKMINEANKEGITVPELGDRFIAAFKEDTAALNIEPATVNPRATEHINEIIEFVQDLIDKDYAYPVDGDVYYRAHKFSHYGELAHLNLDDLEEGASQHTNDEETARKEDPVDFALWKGAKPGEISWPSPWGAGRPGWHIECSVMSTHYLGETFDIHGGGEDLIFPHHQNEIAQSEAKTGKTFVHYWLHNGFVTIGDDNEKMSKSLGNFVTVHDILKTVDPQTLRFFMSTTQYRRPIQYTQQNLDTAERNLERLQTAYDNMGYRLKDAEAGNDPKVEQETRQIVADYIDAMDDDFNVQNGIAKVHELARLGNVYAERPVVFAGTLDFIRQTLSDLLSVFGIKFAAAATLDDDRIQALIDERLAARKSRDFLRSDEIREQLKSQGIILEDTPQGTRWRKEN.

C28 lines the Zn(2+) pocket. Positions 30 to 40 (PTVYNYIHIGN) match the 'HIGH' region motif. Zn(2+) contacts are provided by C212, H237, and E241. The 'KMSKS' region signature appears at 271–275 (KMSKS). Residue K274 participates in ATP binding.

It belongs to the class-I aminoacyl-tRNA synthetase family. Monomer. The cofactor is Zn(2+).

The protein localises to the cytoplasm. It catalyses the reaction tRNA(Cys) + L-cysteine + ATP = L-cysteinyl-tRNA(Cys) + AMP + diphosphate. This is Cysteine--tRNA ligase from Levilactobacillus brevis (strain ATCC 367 / BCRC 12310 / CIP 105137 / JCM 1170 / LMG 11437 / NCIMB 947 / NCTC 947) (Lactobacillus brevis).